Reading from the N-terminus, the 349-residue chain is Magnesium-protoporphyrin IX monomethyl ester [oxidative] cyclase (349 aa).

Belongs to the AcsF family. Requires Fe cation as cofactor.

The protein localises to the plastid. It is found in the chloroplast. It catalyses the reaction Mg-protoporphyrin IX 13-monomethyl ester + 3 NADPH + 3 O2 + 2 H(+) = 3,8-divinyl protochlorophyllide a + 3 NADP(+) + 5 H2O. It functions in the pathway porphyrin-containing compound metabolism; chlorophyll biosynthesis (light-independent). Its function is as follows. Catalyzes the formation of the isocyclic ring in chlorophyll biosynthesis. Mediates the cyclase reaction, which results in the formation of divinylprotochlorophyllide (Pchlide) characteristic of all chlorophylls from magnesium-protoporphyrin IX 13-monomethyl ester (MgPMME). The protein is Magnesium-protoporphyrin IX monomethyl ester [oxidative] cyclase of Pyropia yezoensis (Susabi-nori).